The primary structure comprises 68 residues: Conotoxin reg3.14 (68 aa).

The N-terminal stretch at 1–22 is a signal peptide; that stretch reads MMSKLGVLLTICLLLFPLSVLP. Positions 23-52 are excised as a propeptide; sequence LDGDQPADQPAERMQDISAEQNPWFDPVKR. 3 cysteine pairs are disulfide-bonded: cysteine 53/cysteine 68, cysteine 54/cysteine 64, and cysteine 59/cysteine 67.

The protein belongs to the conotoxin M superfamily. Expressed by the venom duct.

It localises to the secreted. This Conus regius (Crown cone) protein is Conotoxin reg3.14.